The chain runs to 303 residues: Protoheme IX farnesyltransferase (303 aa).

A run of 9 helical transmembrane segments spans residues 17 to 37, 42 to 62, 91 to 111, 114 to 134, 142 to 162, 168 to 188, 208 to 228, 231 to 251, and 270 to 290; these read GVVMLLMVTAVAGMFLATEPA, LATFIPAFVGLSLAMMASAAI, AAITFAVLLATASMIMLYFLV, LTAWLTLFGFVGYAFIYTLYL, IVIGGIAGAIPPLLGWTAVTG, AWLLVLIIFVWTPPHFWALAI, IPFTRESVLYYTILLFICTLL, LTGMSDLIYLLSALILGLVFL, and FGYSITYLFALFTALLVDHYL.

It belongs to the UbiA prenyltransferase family. Protoheme IX farnesyltransferase subfamily.

It localises to the cell inner membrane. The catalysed reaction is heme b + (2E,6E)-farnesyl diphosphate + H2O = Fe(II)-heme o + diphosphate. It functions in the pathway porphyrin-containing compound metabolism; heme O biosynthesis; heme O from protoheme: step 1/1. Functionally, converts heme B (protoheme IX) to heme O by substitution of the vinyl group on carbon 2 of heme B porphyrin ring with a hydroxyethyl farnesyl side group. This Alcanivorax borkumensis (strain ATCC 700651 / DSM 11573 / NCIMB 13689 / SK2) protein is Protoheme IX farnesyltransferase.